A 95-amino-acid chain; its full sequence is Progonadoliberin-1 (95 aa).

The first 23 residues, 1–23 (MAPQTSNLWLLLVVMMVMSQGCC), serve as a signal peptide directing secretion. Position 24 is a pyrrolidone carboxylic acid (Gln24). Gly33 carries the post-translational modification Glycine amide.

Belongs to the GnRH family.

It localises to the secreted. Its function is as follows. Stimulates the secretion of gonadotropins. The polypeptide is Progonadoliberin-1 (gnrh1) (Pagrus major (Red sea bream)).